We begin with the raw amino-acid sequence, 687 residues long: MAKDYLFEIGTEEMPAHVVPRSVSQLADRTRKFLKENGLKFKDIKTFSTPRRLTILVEDLAEKQDDIDEVKKGPAKKIAQDADGNWTKAAQGFARGQGMTTDDIYFEELKGTEYAYVHVQKEGKKASDILLGMSEIIKAMTFPTKMRWDSNDFEFVRPIHWLVSLFGNEVIPVKILDITAGRKTEGHRFLGDSVVLANADDYEDALKDQYVIANAEERKDMIVNQMDELVKENHWQVKPDRDLLEEVTYLVEYPTVFAGSFDEKYLNIPDEVLITSMKDNQRYFEVYDENGKLINHFIAVRNGNKDYLDNVISGNEKVLVARLDDAQFFYDEDRKYPLSHFVDRLKDVSFHDKIGSMAEKVQRVRMIGDYLAKRWNLPENVVKDFDRASELYKFDLVTQMVGEFAELQGVMGMHYARLAGEDEEVSVAIKEHYMPATAEGPLPETTVGSLLSIADKIDTIITFFGAGMIPTSSNDPYALRRYAYGIVRILLNEKWSLPFNEVLPEIISLLNGVTPARLPKSDVDQEIADFIRDRVKQYLQKNKFKYDIIDAVLASSQQDPSQILAAANVLQLHHDDEEFKPVVESLTRIDNILKKAKFKGNVEVDESLFEDNSEKELYVGVQNLQEIESLADLYQGFVQLQPVIDQYFDVNMIMDKNEKVKNNRLAQLYAVSELADRLGNLSKLVIK.

The protein belongs to the class-II aminoacyl-tRNA synthetase family. In terms of assembly, tetramer of two alpha and two beta subunits.

The protein localises to the cytoplasm. The enzyme catalyses tRNA(Gly) + glycine + ATP = glycyl-tRNA(Gly) + AMP + diphosphate. In Lactobacillus acidophilus (strain ATCC 700396 / NCK56 / N2 / NCFM), this protein is Glycine--tRNA ligase beta subunit.